The following is a 547-amino-acid chain: Apicoplast pyruvate carrier 1 (547 aa).

Residues 1-33 are disordered; the sequence is MEPRAPPRLSVSSPRRESGATVPSHSPSTLLSC. Topologically, residues 1–45 are cytoplasmic; it reads MEPRAPPRLSVSSPRRESGATVPSHSPSTLLSCASSETATEKRRR. Residues 21 to 33 are compositionally biased toward polar residues; sequence TVPSHSPSTLLSC. 12 consecutive transmembrane segments (helical) span residues 46 to 66, 126 to 146, 167 to 187, 189 to 209, 212 to 232, 278 to 298, 345 to 365, 385 to 405, 417 to 437, 445 to 465, 467 to 487, and 515 to 535; these read WTGV…GTVY, AWVL…GGIA, VGMA…FGVI, GVGL…WFPE, GIVS…FSPL, LLAV…RVPA, ALVS…GLAI, ILTE…NAVG, GFQT…FFLP, LCYA…FSVF, SAVA…FIFG, and LMGL…ALSP.

This sequence belongs to the major facilitator superfamily. As to quaternary structure, interacts with apicoplast pyruvate carrier 2.

The protein localises to the plastid. It is found in the apicoplast. The protein resides in the membrane. Along with apicoplast pyruvate carrier 2, forms apicoplast pyruvate carrier (APC) complex, which transports pyruvate into the apicoplast and may also transport amino acids like methionine, serine, glycine and tryptophan with low efficiency. Required for maintaining pyruvate-dependent metabolic activities in the apicoplast, such as synthesis of fatty acids, isopentenyl pyrophosphate (IPP), dimethylallyl pyrophosphate (DMAPP) and methylerythritol 4-phosphate (MEP). Required for maintaining the integrity of the apicoplast. Required for normal parasite growth. The protein is Apicoplast pyruvate carrier 1 of Toxoplasma gondii.